Reading from the N-terminus, the 183-residue chain is Adenine phosphoribosyltransferase (183 aa).

This sequence belongs to the purine/pyrimidine phosphoribosyltransferase family. As to quaternary structure, homodimer.

It localises to the cytoplasm. The enzyme catalyses AMP + diphosphate = 5-phospho-alpha-D-ribose 1-diphosphate + adenine. The protein operates within purine metabolism; AMP biosynthesis via salvage pathway; AMP from adenine: step 1/1. In terms of biological role, catalyzes a salvage reaction resulting in the formation of AMP, that is energically less costly than de novo synthesis. This chain is Adenine phosphoribosyltransferase, found in Shigella flexneri serotype 5b (strain 8401).